The primary structure comprises 611 residues: Dihydroxy-acid dehydratase (611 aa).

Asp-81 is a binding site for Mg(2+). Cys-122 contacts [2Fe-2S] cluster. Residues Asp-123 and Lys-124 each contribute to the Mg(2+) site. Lys-124 bears the N6-carboxylysine mark. Cys-195 contributes to the [2Fe-2S] cluster binding site. Mg(2+) is bound at residue Glu-491. Residue Ser-517 is the Proton acceptor of the active site.

Belongs to the IlvD/Edd family. Homodimer. [2Fe-2S] cluster is required as a cofactor. Requires Mg(2+) as cofactor.

It carries out the reaction (2R)-2,3-dihydroxy-3-methylbutanoate = 3-methyl-2-oxobutanoate + H2O. It catalyses the reaction (2R,3R)-2,3-dihydroxy-3-methylpentanoate = (S)-3-methyl-2-oxopentanoate + H2O. It participates in amino-acid biosynthesis; L-isoleucine biosynthesis; L-isoleucine from 2-oxobutanoate: step 3/4. Its pathway is amino-acid biosynthesis; L-valine biosynthesis; L-valine from pyruvate: step 3/4. In terms of biological role, functions in the biosynthesis of branched-chain amino acids. Catalyzes the dehydration of (2R,3R)-2,3-dihydroxy-3-methylpentanoate (2,3-dihydroxy-3-methylvalerate) into 2-oxo-3-methylpentanoate (2-oxo-3-methylvalerate) and of (2R)-2,3-dihydroxy-3-methylbutanoate (2,3-dihydroxyisovalerate) into 2-oxo-3-methylbutanoate (2-oxoisovalerate), the penultimate precursor to L-isoleucine and L-valine, respectively. The polypeptide is Dihydroxy-acid dehydratase (Histophilus somni (strain 129Pt) (Haemophilus somnus)).